The primary structure comprises 129 residues: Small ribosomal subunit protein uS11 (129 aa).

The protein belongs to the universal ribosomal protein uS11 family. In terms of assembly, part of the 30S ribosomal subunit. Interacts with proteins S7 and S18. Binds to IF-3.

In terms of biological role, located on the platform of the 30S subunit, it bridges several disparate RNA helices of the 16S rRNA. Forms part of the Shine-Dalgarno cleft in the 70S ribosome. This Serratia proteamaculans (strain 568) protein is Small ribosomal subunit protein uS11.